The sequence spans 130 residues: Histone H2A type 1-E (130 aa).

The interval Met1–Ala22 is disordered. Ser2 carries the N-acetylserine modification. Residue Ser2 is modified to Phosphoserine; by RPS6KA5. Arg4 carries the post-translational modification Citrulline; alternate. Symmetric dimethylarginine; by PRMT5; alternate is present on Arg4. Lys6 and Lys10 each carry N6-(2-hydroxyisobutyryl)lysine; alternate. Residue Lys6 is modified to N6-acetyllysine; alternate. A compositionally biased stretch (basic residues) spans Gln7–Ser19. Lys10 carries the N6-lactoyllysine; alternate modification. Lys10 carries the N6-succinyllysine; alternate modification. Residues Lys14 and Lys16 each participate in a glycyl lysine isopeptide (Lys-Gly) (interchain with G-Cter in ubiquitin) cross-link. Lys37 is modified (N6-(2-hydroxyisobutyryl)lysine; alternate). Lys37 is subject to N6-(beta-hydroxybutyryl)lysine; alternate. Lys37 carries the post-translational modification N6-crotonyllysine; alternate. Lys75 and Lys76 each carry N6-(2-hydroxyisobutyryl)lysine. Lys96 carries the N6-(2-hydroxyisobutyryl)lysine; alternate modification. At Lys96 the chain carries N6-succinyllysine; alternate. Position 96 is an N6-glutaryllysine; alternate (Lys96). Gln105 is subject to N5-methylglutamine. The residue at position 119 (Lys119) is an N6-(2-hydroxyisobutyryl)lysine; alternate. 2 positions are modified to N6-crotonyllysine; alternate: Lys119 and Lys120. Residues Lys119 and Lys120 each carry the N6-glutaryllysine; alternate modification. Lys120 participates in a covalent cross-link: Glycyl lysine isopeptide (Lys-Gly) (interchain with G-Cter in ubiquitin); alternate. Phosphothreonine; by DCAF1 is present on Thr121. Lys126 carries the N6-crotonyllysine; alternate modification. The residue at position 126 (Lys126) is an N6-glutaryllysine; alternate.

Belongs to the histone H2A family. The nucleosome is a histone octamer containing two molecules each of H2A, H2B, H3 and H4 assembled in one H3-H4 heterotetramer and two H2A-H2B heterodimers. The octamer wraps approximately 147 bp of DNA. In terms of processing, deiminated on Arg-4 in granulocytes upon calcium entry. Post-translationally, monoubiquitination of Lys-120 (H2AK119Ub) by RING1, TRIM37 and RNF2/RING2 complex gives a specific tag for epigenetic transcriptional repression and participates in X chromosome inactivation of female mammals. It is involved in the initiation of both imprinted and random X inactivation. Ubiquitinated H2A is enriched in inactive X chromosome chromatin. Ubiquitination of H2A functions downstream of methylation of 'Lys-27' of histone H3 (H3K27me). H2AK119Ub by RNF2/RING2 can also be induced by ultraviolet and may be involved in DNA repair. Following DNA double-strand breaks (DSBs), it is ubiquitinated through 'Lys-63' linkage of ubiquitin moieties by the E2 ligase UBE2N and the E3 ligases RNF8 and RNF168, leading to the recruitment of repair proteins to sites of DNA damage. Ubiquitination at Lys-14 and Lys-16 (H2AK13Ub and H2AK15Ub, respectively) in response to DNA damage is initiated by RNF168 that mediates monoubiquitination at these 2 sites, and 'Lys-63'-linked ubiquitin are then conjugated to monoubiquitin; RNF8 is able to extend 'Lys-63'-linked ubiquitin chains in vitro. H2AK119Ub and ionizing radiation-induced 'Lys-63'-linked ubiquitination (H2AK13Ub and H2AK15Ub) are distinct events. Phosphorylation on Ser-2 (H2AS1ph) is enhanced during mitosis. Phosphorylation on Ser-2 by RPS6KA5/MSK1 directly represses transcription. Acetylation of H3 inhibits Ser-2 phosphorylation by RPS6KA5/MSK1. Phosphorylation at Thr-121 (H2AT120ph) by DCAF1 is present in the regulatory region of many tumor suppresor genes and down-regulates their transcription. In terms of processing, symmetric dimethylation on Arg-4 by the PRDM1/PRMT5 complex may play a crucial role in the germ-cell lineage. Post-translationally, glutamine methylation at Gln-105 (H2AQ104me) by FBL is specifically dedicated to polymerase I. It is present at 35S ribosomal DNA locus and impairs binding of the FACT complex. Crotonylation (Kcr) is specifically present in male germ cells and marks testis-specific genes in post-meiotic cells, including X-linked genes that escape sex chromosome inactivation in haploid cells. Crotonylation marks active promoters and enhancers and confers resistance to transcriptional repressors. It is also associated with post-meiotically activated genes on autosomes. In terms of processing, lactylated in macrophages by EP300/P300 by using lactoyl-CoA directly derived from endogenous or exogenous lactate, leading to stimulates gene transcription.

Its subcellular location is the nucleus. The protein resides in the chromosome. Its function is as follows. Core component of nucleosome. Nucleosomes wrap and compact DNA into chromatin, limiting DNA accessibility to the cellular machineries which require DNA as a template. Histones thereby play a central role in transcription regulation, DNA repair, DNA replication and chromosomal stability. DNA accessibility is regulated via a complex set of post-translational modifications of histones, also called histone code, and nucleosome remodeling. This Rattus norvegicus (Rat) protein is Histone H2A type 1-E.